A 225-amino-acid polypeptide reads, in one-letter code: tRNA (guanine-N(1)-)-methyltransferase (225 aa).

S-adenosyl-L-methionine-binding positions include glycine 112 and 132–137 (IGDYVL).

It belongs to the RNA methyltransferase TrmD family. Homodimer.

Its subcellular location is the cytoplasm. It carries out the reaction guanosine(37) in tRNA + S-adenosyl-L-methionine = N(1)-methylguanosine(37) in tRNA + S-adenosyl-L-homocysteine + H(+). Functionally, specifically methylates guanosine-37 in various tRNAs. This chain is tRNA (guanine-N(1)-)-methyltransferase, found in Bacteroides fragilis (strain ATCC 25285 / DSM 2151 / CCUG 4856 / JCM 11019 / LMG 10263 / NCTC 9343 / Onslow / VPI 2553 / EN-2).